We begin with the raw amino-acid sequence, 461 residues long: Cyclic 2,3-diphosphoglycerate synthetase (461 aa).

The protein belongs to the cyclic 2,3-diphosphoglycerate synthetase family.

It localises to the cytoplasm. The enzyme catalyses (2R)-2,3-bisphosphoglycerate + ATP + H(+) = cyclic (2R)-2,3-bisphosphoglycerate + ADP + phosphate. Functionally, catalyzes the formation of cyclic 2,3-diphosphoglycerate (cDPG) by formation of an intramolecular phosphoanhydride bond at the expense of ATP. This chain is Cyclic 2,3-diphosphoglycerate synthetase, found in Methanosphaera stadtmanae (strain ATCC 43021 / DSM 3091 / JCM 11832 / MCB-3).